The sequence spans 944 residues: Thyroid peroxidase (944 aa).

The N-terminal stretch at 1–30 (MVGLVPAGSAWGGRALAVLGVTLLVALARG) is a signal peptide. The Extracellular segment spans residues 31 to 858 (LLPFFLGGRD…SGRLPKASLV (828 aa)). N-linked (GlcNAc...) asparagine glycosylation occurs at Asn-141. A disulfide bridge connects residues Cys-154 and Cys-170. Asp-250 is a binding site for heme b. His-251 acts as the Proton acceptor in catalysis. Asp-252 provides a ligand contact to Ca(2+). 2 cysteine pairs are disulfide-bonded: Cys-271–Cys-281 and Cys-275–Cys-295. An N-linked (GlcNAc...) asparagine glycan is attached at Asn-316. The Ca(2+) site is built by Thr-330, Phe-332, Asp-334, and Ser-336. N-linked (GlcNAc...) asparagine glycosylation is present at Asn-351. Heme b is bound by residues Glu-408 and His-503. 7 disulfide bridges follow: Cys-606–Cys-663, Cys-704–Cys-729, Cys-750–Cys-790, Cys-776–Cys-802, Cys-808–Cys-822, Cys-816–Cys-831, and Cys-833–Cys-846. Asn-623 carries N-linked (GlcNAc...) asparagine glycosylation. The 57-residue stretch at 748-804 (DACGLPDSLDNGDVVLCGEAGRRVLVFSCRHGFKLQGPEQVACSPRGGAVRAPVCRD) folds into the Sushi domain. The EGF-like; calcium-binding domain maps to 804 to 847 (DINECEDASHPPCHGSARCRNTKGGFRCECTDPAVLGEDGTTCV). Residues 859 to 879 (SIALGIVLVVGLAGLTWTLVC) form a helical membrane-spanning segment. Residues 880-944 (RWAHAGRKAS…RSHVAQGSPA (65 aa)) are Cytoplasmic-facing. Residues 895–944 (LGGRGAPPPGRGAGQDGASGSLVPPLGPQGRTRAVDPTSSRSHVAQGSPA) form a disordered region. Over residues 931–944 (PTSSRSHVAQGSPA) the composition is skewed to polar residues.

The protein belongs to the peroxidase family. XPO subfamily. Interacts with DUOX1, DUOX2 and CYBA. Ca(2+) is required as a cofactor. The cofactor is heme b. Heme is covalently bound through a H(2)O(2)-dependent autocatalytic process. Heme insertion is important for the delivery of protein at the cell surface. Post-translationally, cleaved in its N-terminal part.

It localises to the membrane. The catalysed reaction is 2 iodide + H2O2 + 2 H(+) = diiodine + 2 H2O. It catalyses the reaction [thyroglobulin]-L-tyrosine + iodide + H2O2 + H(+) = [thyroglobulin]-3-iodo-L-tyrosine + 2 H2O. It carries out the reaction [thyroglobulin]-3-iodo-L-tyrosine + iodide + H2O2 + H(+) = [thyroglobulin]-3,5-diiodo-L-tyrosine + 2 H2O. The enzyme catalyses 2 [thyroglobulin]-3,5-diiodo-L-tyrosine + H2O2 = [thyroglobulin]-L-thyroxine + [thyroglobulin]-dehydroalanine + 2 H2O. The catalysed reaction is [thyroglobulin]-3-iodo-L-tyrosine + [thyroglobulin]-3,5-diiodo-L-tyrosine + H2O2 = [thyroglobulin]-3,3',5-triiodo-L-thyronine + [thyroglobulin]-dehydroalanine + 2 H2O. The protein operates within hormone biosynthesis; thyroid hormone biosynthesis. Iodination and coupling of the hormonogenic tyrosines in thyroglobulin to yield the thyroid hormones T(3) and T(4). The chain is Thyroid peroxidase (TPO) from Canis lupus familiaris (Dog).